The chain runs to 417 residues: NADH-quinone oxidoreductase subunit D (417 aa).

It belongs to the complex I 49 kDa subunit family. As to quaternary structure, NDH-1 is composed of 14 different subunits. Subunits NuoB, C, D, E, F, and G constitute the peripheral sector of the complex.

It localises to the cell inner membrane. It catalyses the reaction a quinone + NADH + 5 H(+)(in) = a quinol + NAD(+) + 4 H(+)(out). NDH-1 shuttles electrons from NADH, via FMN and iron-sulfur (Fe-S) centers, to quinones in the respiratory chain. The immediate electron acceptor for the enzyme in this species is believed to be ubiquinone. Couples the redox reaction to proton translocation (for every two electrons transferred, four hydrogen ions are translocated across the cytoplasmic membrane), and thus conserves the redox energy in a proton gradient. The protein is NADH-quinone oxidoreductase subunit D of Burkholderia multivorans (strain ATCC 17616 / 249).